The chain runs to 170 residues: Probable calcium-binding protein CML27 (170 aa).

Position 2 is an N-acetylalanine (A2). 4 EF-hand domains span residues 19–54 (ANPE…MGTS), 55–85 (YTET…TLCR), 88–123 (SSAA…LGMS), and 136–159 (VDAD…SSLL). The Ca(2+) site is built by D32, N34, D36, K38, E43, D68, D70, D72, Y74, E79, D101, D103, N105, E112, D137, D139, D141, N143, and E148.

Its function is as follows. Potential calcium sensor. This Arabidopsis thaliana (Mouse-ear cress) protein is Probable calcium-binding protein CML27 (CML27).